We begin with the raw amino-acid sequence, 876 residues long: Extended synaptotagmin-2-B (876 aa).

A disordered region spans residues M1–P21. The Cytoplasmic portion of the chain corresponds to M1–G35. The chain crosses the membrane as a helical span at residues M36 to F56. Topologically, residues P57 to Y59 are lumenal. Residues V60 to W80 traverse the membrane as a helical segment. Over W81 to S876 the chain is Cytoplasmic. The region spanning D123 to V302 is the SMP-LTD domain. C2 domains are found at residues L301–F421 and N446–N592. Ca(2+) is bound by residues K332, D333, D345, D392, E393, D394, D396, D398, and D399. Positions V614–D714 are disordered. A compositionally biased stretch (pro residues) spans P636 to P656. A compositionally biased stretch (low complexity) spans S686–S698. The C2 3 domain maps to P741 to F863. A required for phosphatidylinositol 4,5-bisphosphate-dependent location at the cell membrane region spans residues K788–K795.

This sequence belongs to the extended synaptotagmin family. In terms of assembly, interacts with fgfr1 that has been activated by fgf1 binding. Interacts (via C2 domains) with the AP-2 complex (via an alpha subunit). Identified in a complex with the AP-2 complex and fgfr1.

Its subcellular location is the cell membrane. It is found in the endoplasmic reticulum membrane. Its function is as follows. Tethers the endoplasmic reticulum to the cell membrane and promotes the formation of appositions between the endoplasmic reticulum and the cell membrane. Binds glycerophospholipids in a barrel-like domain and may play a role in cellular lipid transport. Plays a role in the rapid internalization of fgfr1 that has been activated by fgf1 binding; this occurs most likely via the AP-2 complex. Required for normal fgf signaling and the activation of downstream signaling cascades via its role in the internalization of activated fgfr1. Required for normal embryonic development via its role in fgf signaling and the downstream regulation of t/xBRA expression. This is Extended synaptotagmin-2-B (esyt2-b) from Xenopus laevis (African clawed frog).